Consider the following 245-residue polypeptide: Derlin-1 (245 aa).

Residues 1-5 (MDLEN) are Cytoplasmic-facing. The chain crosses the membrane as a helical span at residues 6 to 26 (FLLGIPIVTRYWFLASTIIPL). Residues 27–57 (LGRFGFINVQWMFLQWDLVVNKFQFWRPLTA) are Lumenal-facing. The helical transmembrane segment at 58 to 78 (LIYYPVTPQTGFHWLMMCYFL) threads the bilayer. Residues 79–100 (YNYSKALESETYRGRSADYLFM) are Cytoplasmic-facing. The chain crosses the membrane as a helical span at residues 101–121 (LIFNWFFCSGLCMALDIYFLL). Over 122-166 (EPMVISVLYVWCQVNKDTIVSFWFGMRFPARYLPWVLWGFNAVLR) the chain is Lumenal. Residues 167 to 187 (GGGTNELVGILVGHAYFFVAL) traverse the membrane as a helical segment. Over 188–245 (KYPDEYGVDLISTPEFLHRLIPDEDGGIHGQDGNIRGARQQPRGHQWPGGVGARLGGN) the chain is Cytoplasmic. The interval 218–245 (QDGNIRGARQQPRGHQWPGGVGARLGGN) is disordered. Over residues 234 to 245 (WPGGVGARLGGN) the composition is skewed to gly residues.

Belongs to the derlin family.

The protein localises to the endoplasmic reticulum membrane. In terms of biological role, specifically required for the degradation process of misfolded endoplasmic reticulum (ER) luminal proteins. Participates in the transfer of misfolded proteins from the ER to the cytosol, where they are destroyed by the proteasome in a ubiquitin-dependent manner. In Caenorhabditis elegans, this protein is Derlin-1.